The primary structure comprises 447 residues: Argininosuccinate synthase (447 aa).

ATP is bound by residues 17 to 25 (AFSGGLDTS) and A43. Y99 lines the L-citrulline pocket. 2 residues coordinate ATP: G129 and T131. Positions 131, 135, and 136 each coordinate L-aspartate. Residue N135 coordinates L-citrulline. Residue D136 participates in ATP binding. L-citrulline-binding residues include R139 and S192. An ATP-binding site is contributed by D194. 3 residues coordinate L-citrulline: T201, E203, and E280.

Belongs to the argininosuccinate synthase family. Type 2 subfamily. In terms of assembly, homotetramer.

Its subcellular location is the cytoplasm. The enzyme catalyses L-citrulline + L-aspartate + ATP = 2-(N(omega)-L-arginino)succinate + AMP + diphosphate + H(+). It participates in amino-acid biosynthesis; L-arginine biosynthesis; L-arginine from L-ornithine and carbamoyl phosphate: step 2/3. The chain is Argininosuccinate synthase from Escherichia coli O139:H28 (strain E24377A / ETEC).